The following is a 506-amino-acid chain: GTPase Der (506 aa).

EngA-type G domains follow at residues 3–166 and 218–391; these read PVVA…GEQL and IKIA…ACAT. Residues 9 to 16, 56 to 60, 118 to 121, 224 to 231, 271 to 275, and 336 to 339 contribute to the GTP site; these read GRPNVGKS, DTGGI, NKTD, DTAGV, and NKWD. One can recognise a KH-like domain in the interval 392–476; the sequence is QKTSTSMLTR…PIRIQFQEGN (85 aa).

The protein belongs to the TRAFAC class TrmE-Era-EngA-EngB-Septin-like GTPase superfamily. EngA (Der) GTPase family. As to quaternary structure, associates with the 50S ribosomal subunit.

In terms of biological role, GTPase that plays an essential role in the late steps of ribosome biogenesis. This Actinobacillus pleuropneumoniae serotype 5b (strain L20) protein is GTPase Der.